The sequence spans 636 residues: Threonine--tRNA ligase (636 aa).

Positions 1–61 (MPVITLPDGS…TQDASLQLIT (61 aa)) constitute a TGS domain. The catalytic stretch occupies residues 243–534 (DHRKIGKTLD…LIEEFTGKFP (292 aa)). Zn(2+)-binding residues include Cys334, His385, and His511.

The protein belongs to the class-II aminoacyl-tRNA synthetase family. Homodimer. Zn(2+) serves as cofactor.

The protein localises to the cytoplasm. The enzyme catalyses tRNA(Thr) + L-threonine + ATP = L-threonyl-tRNA(Thr) + AMP + diphosphate + H(+). Catalyzes the attachment of threonine to tRNA(Thr) in a two-step reaction: L-threonine is first activated by ATP to form Thr-AMP and then transferred to the acceptor end of tRNA(Thr). Also edits incorrectly charged L-seryl-tRNA(Thr). The chain is Threonine--tRNA ligase from Colwellia psychrerythraea (strain 34H / ATCC BAA-681) (Vibrio psychroerythus).